The following is a 732-amino-acid chain: DNA gyrase subunit B, mitochondrial (732 aa).

Residues 513–620 form the Toprim domain; that stretch reads SEIFIVEGDS…RYQRALFDAG (108 aa). 3 residues coordinate Mg(2+): Glu-519, Asp-593, and Asp-595.

This sequence belongs to the type II topoisomerase GyrB family. As to quaternary structure, made up of two chains. The A chain is responsible for DNA breakage and rejoining; the B chain catalyzes ATP hydrolysis. The cofactor is Mg(2+). Mn(2+) serves as cofactor. Requires Ca(2+) as cofactor.

Its subcellular location is the mitochondrion. The catalysed reaction is ATP-dependent breakage, passage and rejoining of double-stranded DNA.. Functionally, a type II topoisomerase that negatively supercoils closed circular double-stranded DNA in an ATP-dependent manner. The protein is DNA gyrase subunit B, mitochondrial (GYRBM) of Arabidopsis thaliana (Mouse-ear cress).